The following is a 514-amino-acid chain: AAA-ATPase ASD, mitochondrial (514 aa).

The helical transmembrane segment at 7-24 threads the bilayer; sequence VWTNTGSALASLVFIYTI. 250 to 257 lines the ATP pocket; the sequence is GPPGTGKS. Disordered regions lie at residues 311 to 342 and 467 to 514; these read GQRKQKKDEEEDEDETSPIEKQMKKDQGENKG and KEEA…TMKD. Basic and acidic residues-rich tracts occupy residues 331-342 and 467-502; these read KQMKKDQGENKG and KEEAKRRIEDEEKKKKEEEEIKRKKREEKKIKKEEK.

This sequence belongs to the AAA ATPase family. BCS1 subfamily. Requires Mg(2+) as cofactor. In terms of tissue distribution, expressed in seeds, specifically in the embryo.

It localises to the mitochondrion membrane. The catalysed reaction is ATP + H2O = ADP + phosphate + H(+). Functionally, required to regulate morphology and anatomy during seed maturation. In Arabidopsis thaliana (Mouse-ear cress), this protein is AAA-ATPase ASD, mitochondrial (AATP1).